Here is a 388-residue protein sequence, read N- to C-terminus: Deoxyguanosinetriphosphate triphosphohydrolase-like protein (388 aa).

Residues 24–44 (HSAQTRGRVHAEPPSTSRTEF) form a disordered region. Residues 78 to 209 (RLTHSLEVAQ…ANLADEVAYN (132 aa)) form the HD domain.

This sequence belongs to the dGTPase family. Type 2 subfamily.

This is Deoxyguanosinetriphosphate triphosphohydrolase-like protein from Ralstonia pickettii (strain 12J).